Consider the following 394-residue polypeptide: Acetyl-CoA acetyltransferase (394 aa).

Cys-89 (acyl-thioester intermediate) is an active-site residue. Residues His-350 and Cys-380 each act as proton acceptor in the active site.

It belongs to the thiolase-like superfamily. Thiolase family. As to quaternary structure, homotetramer.

It is found in the cytoplasm. It catalyses the reaction 2 acetyl-CoA = acetoacetyl-CoA + CoA. It functions in the pathway biopolymer metabolism; poly-(R)-3-hydroxybutanoate biosynthesis. It participates in metabolic intermediate biosynthesis; (R)-mevalonate biosynthesis; (R)-mevalonate from acetyl-CoA: step 1/3. This is Acetyl-CoA acetyltransferase from Thiocystis violacea.